Consider the following 1047-residue polypeptide: Jouberin (1047 aa).

3 stretches are compositionally biased toward basic and acidic residues: residues 1–17 (MEPETPEKVDSAQEKVR), 29–40 (SREKTGIEEKGE), and 77–86 (LLHDDKLASE). 2 disordered regions span residues 1–40 (MEPETPEKVDSAQEKVRGKTPTADDSDDSREKTGIEEKGE) and 67–181 (EQLT…SRDS). The tract at residues 1–284 (MEPETPEKVD…IFNENFPYLL (284 aa)) is interaction with HAP1. Residues 96–106 (PVPTKPESSPS) are compositionally biased toward low complexity. Residues 115 to 138 (GEQKKEGTPEDSQHMEGICSREQD) show a composition bias toward basic and acidic residues. A compositionally biased stretch (basic residues) spans 149 to 159 (PKPKKTKKKTK). The segment covering 172 to 181 (GVHEITSRDS) has biased composition (basic and acidic residues). 7 WD repeats span residues 457-499 (AGER…FMRE), 502-541 (GHLNIIYDLDWSKDDRYLVTSSSDGTARVWKNEINSTSTF), 545-585 (PHPS…DAAI), 592-631 (VHKSFVNSICFDDEGHHMYSGDCIGVIVVWDTYVKVNDVQ), 648-687 (FRGVPISYLEVHPNGKRLLIHTKDSTLRIMDLRILAARKF), 691-730 (ANYREKIHSTLTPCGTLLFSGSEDGIVYVWNPETGEQVAM), and 735-776 (PFKS…AQQE). Ser-853 carries the phosphoserine modification. One can recognise an SH3 domain in the interval 902 to 962 (DPPPMVVALY…PANHVASETL (61 aa)). Composition is skewed to basic and acidic residues over residues 963–987 (YRDSPPKVKERSPPLTPKEKTKPEK) and 1013–1040 (HSEKGKDQNVEDRGHKVDMETKKSEPVV). Positions 963–1047 (YRDSPPKVKE…PVVRKVTLIE (85 aa)) are disordered. At Ser-974 the chain carries Phosphoserine.

In terms of assembly, self-associates. Part of the tectonic-like complex (also named B9 complex). Interacts with MKS1. Interacts with NPHP1; probably as heterodimers and/or AHI1(2):NPHP1(2) heterotetramers. Interacts (via SH3 domain) with the dynamin GTPase DNM2. Interacts with HAP1; probably as AHI1(2):HAP1(2) heterotetramers. Interacts with RAB8A. Interacts with CEND1. Interacts with SPATA7. In terms of tissue distribution, expressed in the retina (at protein level). Highly expressed in the brain. Highly expressed in the testis. Expressed in the kidney, thymus, heart, lung, spleen. Weakly expressed in the liver, stomach, pancreas, and embryo. Strongly expressed during periods of both cortical and cerebellar development.

The protein resides in the cytoplasm. It localises to the cytoskeleton. The protein localises to the cilium basal body. Its subcellular location is the microtubule organizing center. It is found in the centrosome. The protein resides in the centriole. It localises to the cell junction. The protein localises to the adherens junction. Its function is as follows. Involved in vesicle trafficking and required for ciliogenesis, formation of primary non-motile cilium, and recruitment of RAB8A to the basal body of primary cilium. Component of the tectonic-like complex, a complex localized at the transition zone of primary cilia and acting as a barrier that prevents diffusion of transmembrane proteins between the cilia and plasma membranes. Involved in neuronal differentiation. As a positive modulator of classical Wnt signaling, may play a crucial role in ciliary signaling during cerebellum embryonic development. This Mus musculus (Mouse) protein is Jouberin (Ahi1).